Here is a 451-residue protein sequence, read N- to C-terminus: ATP-dependent protease ATPase subunit HslU (451 aa).

ATP contacts are provided by residues isoleucine 26, 68–73 (GVGKTE), aspartate 263, glutamate 328, and arginine 400.

It belongs to the ClpX chaperone family. HslU subfamily. In terms of assembly, a double ring-shaped homohexamer of HslV is capped on each side by a ring-shaped HslU homohexamer. The assembly of the HslU/HslV complex is dependent on binding of ATP.

The protein resides in the cytoplasm. Functionally, ATPase subunit of a proteasome-like degradation complex; this subunit has chaperone activity. The binding of ATP and its subsequent hydrolysis by HslU are essential for unfolding of protein substrates subsequently hydrolyzed by HslV. HslU recognizes the N-terminal part of its protein substrates and unfolds these before they are guided to HslV for hydrolysis. This is ATP-dependent protease ATPase subunit HslU from Dichelobacter nodosus (strain VCS1703A).